The chain runs to 220 residues: Protein-L-isoaspartate O-methyltransferase (220 aa).

The active site involves Ser65.

This sequence belongs to the methyltransferase superfamily. L-isoaspartyl/D-aspartyl protein methyltransferase family.

The protein resides in the cytoplasm. It carries out the reaction [protein]-L-isoaspartate + S-adenosyl-L-methionine = [protein]-L-isoaspartate alpha-methyl ester + S-adenosyl-L-homocysteine. In terms of biological role, catalyzes the methyl esterification of L-isoaspartyl residues in peptides and proteins that result from spontaneous decomposition of normal L-aspartyl and L-asparaginyl residues. It plays a role in the repair and/or degradation of damaged proteins. The protein is Protein-L-isoaspartate O-methyltransferase (pcm) of Pyrococcus horikoshii (strain ATCC 700860 / DSM 12428 / JCM 9974 / NBRC 100139 / OT-3).